A 148-amino-acid chain; its full sequence is MPYRILFVCTGNTCRSPMAAALLENKQLPGVEVKSAGVFAAEGSEASVHAKMVLKEKGIEAAHRSSQLKKEHIDWATHVLAMTSGHKDMIVERFPEAKDKTFTLKQFVSGTDGDIADPFGGPIEVYRAARDELETLIDRLAEKLQTEQ.

The active-site Nucleophile is Cys-9. Residue 10–15 (TGNTCR) coordinates substrate. Arg-15 is an active-site residue. The active-site Proton donor is Asp-117.

Belongs to the low molecular weight phosphotyrosine protein phosphatase family. Is present in solution as a mixture of monomers, dimers and higher order oligomers (trimers and tetramers).

The catalysed reaction is N(omega)-phospho-L-arginyl-[protein] + H2O = L-arginyl-[protein] + phosphate. Irreversibly inhibited by the synthetic inhibitor cyc-SeCN-amidine, which inactivates the enzyme by inducing disulfide bond formation between the two active site cysteine residues Cys-9 and Cys-14. In terms of biological role, catalyzes the specific dephosphorylation of phosphoarginine residues in proteins. Probably counteracts the protein arginine kinase McsB in vivo. Exhibits almost no activity against pTyr peptides. Protein arginine phosphorylation has a physiologically important role and is involved in the regulation of many critical cellular processes, such as protein homeostasis, motility, competence, and stringent and stress responses, by regulating gene expression and protein activity. The chain is Protein-arginine-phosphatase (ywle) from Geobacillus stearothermophilus (Bacillus stearothermophilus).